The sequence spans 438 residues: Thymidine phosphorylase (438 aa).

The protein belongs to the thymidine/pyrimidine-nucleoside phosphorylase family. In terms of assembly, homodimer.

It carries out the reaction thymidine + phosphate = 2-deoxy-alpha-D-ribose 1-phosphate + thymine. The protein operates within pyrimidine metabolism; dTMP biosynthesis via salvage pathway; dTMP from thymine: step 1/2. Functionally, the enzymes which catalyze the reversible phosphorolysis of pyrimidine nucleosides are involved in the degradation of these compounds and in their utilization as carbon and energy sources, or in the rescue of pyrimidine bases for nucleotide synthesis. The polypeptide is Thymidine phosphorylase (Sinorhizobium fredii (strain NBRC 101917 / NGR234)).